We begin with the raw amino-acid sequence, 543 residues long: CTP synthase (543 aa).

The amidoligase domain stretch occupies residues 1-270 (MNNLTSTKFI…DTQILKHFNI (270 aa)). Ser18 contacts CTP. Position 18 (Ser18) interacts with UTP. ATP contacts are provided by residues 19-24 (SLGKGL) and Asp76. Mg(2+) is bound by residues Asp76 and Glu144. Residues 151–153 (DIE), 191–196 (KTKPTQ), and Lys227 each bind CTP. UTP contacts are provided by residues 191–196 (KTKPTQ) and Lys227. Residues 295-537 (TIAIIGKYIK…IQASLNYQET (243 aa)) enclose the Glutamine amidotransferase type-1 domain. Gly356 contacts L-glutamine. The active-site Nucleophile; for glutamine hydrolysis is the Cys383. L-glutamine-binding positions include 384–387 (MGMQ), Glu407, and Arg462. Active-site residues include His510 and Glu512.

The protein belongs to the CTP synthase family. Homotetramer.

It carries out the reaction UTP + L-glutamine + ATP + H2O = CTP + L-glutamate + ADP + phosphate + 2 H(+). The enzyme catalyses L-glutamine + H2O = L-glutamate + NH4(+). The catalysed reaction is UTP + NH4(+) + ATP = CTP + ADP + phosphate + 2 H(+). It participates in pyrimidine metabolism; CTP biosynthesis via de novo pathway; CTP from UDP: step 2/2. Allosterically activated by GTP, when glutamine is the substrate; GTP has no effect on the reaction when ammonia is the substrate. The allosteric effector GTP functions by stabilizing the protein conformation that binds the tetrahedral intermediate(s) formed during glutamine hydrolysis. Inhibited by the product CTP, via allosteric rather than competitive inhibition. Its function is as follows. Catalyzes the ATP-dependent amination of UTP to CTP with either L-glutamine or ammonia as the source of nitrogen. Regulates intracellular CTP levels through interactions with the four ribonucleotide triphosphates. This Ehrlichia ruminantium (strain Gardel) protein is CTP synthase.